A 310-amino-acid polypeptide reads, in one-letter code: Acetylglutamate kinase (310 aa).

Substrate contacts are provided by residues 83-84 (GG), arginine 105, and asparagine 207.

Belongs to the acetylglutamate kinase family. ArgB subfamily.

The protein resides in the cytoplasm. The catalysed reaction is N-acetyl-L-glutamate + ATP = N-acetyl-L-glutamyl 5-phosphate + ADP. It participates in amino-acid biosynthesis; L-arginine biosynthesis; N(2)-acetyl-L-ornithine from L-glutamate: step 2/4. Functionally, catalyzes the ATP-dependent phosphorylation of N-acetyl-L-glutamate. This chain is Acetylglutamate kinase, found in Ralstonia nicotianae (strain ATCC BAA-1114 / GMI1000) (Ralstonia solanacearum).